A 343-amino-acid chain; its full sequence is Methionine synthase (343 aa).

Positions 211, 213, 236, and 315 each coordinate Zn(2+).

The protein belongs to the archaeal MetE family. Requires Zn(2+) as cofactor.

Its pathway is amino-acid biosynthesis; L-methionine biosynthesis via de novo pathway. Its function is as follows. Catalyzes the transfer of a methyl group to L-homocysteine resulting in methionine formation. The physiological methyl donor is unknown. This is Methionine synthase from Thermoplasma acidophilum (strain ATCC 25905 / DSM 1728 / JCM 9062 / NBRC 15155 / AMRC-C165).